The chain runs to 753 residues: Synaptotagmin-like protein 5 (753 aa).

The RabBD domain occupies 7–123 (FINLSFLLDH…IISGEWFLEE (117 aa)). The segment at 64–106 (CVHCHKTLGLIFDRGDPCQACSLRVCSECRVTGLDGSWKCTVC) adopts an FYVE-type zinc-finger fold. 3 disordered regions span residues 145-279 (RRSP…SREH), 297-359 (LTKS…LNSL), and 380-404 (LASGLSTNSQAGSDRKRSYLNVPDA). Ser147 carries the post-translational modification Phosphoserine. The segment covering 150 to 174 (SEETQNQEQAQQCVDKSDTLSSVRQ) has biased composition (polar residues). Positions 195–206 (TRGEIRTPKPES) are enriched in basic and acidic residues. Residues 214–223 (LDSQNLQSFK) are compositionally biased toward polar residues. Residues 224 to 237 (SASGSDRGSTTSSD) show a composition bias toward low complexity. A compositionally biased stretch (polar residues) spans 249 to 275 (KSSYSNGGIPVTQRSPVPSAHSVTSIN). A compositionally biased stretch (polar residues) spans 380–391 (LASGLSTNSQAG). C2 domains follow at residues 429 to 550 (VTGE…DEWF) and 597 to 717 (KRGK…VDWM).

Binds RAB27A that has been activated by GTP-binding.

The protein resides in the membrane. Its function is as follows. May act as Rab effector protein and play a role in vesicle trafficking. Binds phospholipids. The sequence is that of Synaptotagmin-like protein 5 (Sytl5) from Mus musculus (Mouse).